The primary structure comprises 66 residues: MAKSKDVRVTITLECISCDRNNSDKRFPGVSRYTTRKNQRNTPTRLELKKFCPYCSEHTIHRELKK.

Belongs to the bacterial ribosomal protein bL33 family.

The protein resides in the plastid. Its subcellular location is the chloroplast. In Angiopteris evecta (Mule's foot fern), this protein is Large ribosomal subunit protein bL33c.